Here is a 309-residue protein sequence, read N- to C-terminus: Oxygen-dependent coproporphyrinogen-III oxidase (309 aa).

Ser-94 contributes to the substrate binding site. Residues His-98 and His-108 each coordinate a divalent metal cation. Catalysis depends on His-108, which acts as the Proton donor. Asn-110–Arg-112 serves as a coordination point for substrate. A divalent metal cation-binding residues include His-147 and His-177. An important for dimerization region spans residues Tyr-242–Glu-277. Position 260-262 (Gly-260–Arg-262) interacts with substrate.

Belongs to the aerobic coproporphyrinogen-III oxidase family. Homodimer. A divalent metal cation is required as a cofactor.

Its subcellular location is the cytoplasm. It carries out the reaction coproporphyrinogen III + O2 + 2 H(+) = protoporphyrinogen IX + 2 CO2 + 2 H2O. Its pathway is porphyrin-containing compound metabolism; protoporphyrin-IX biosynthesis; protoporphyrinogen-IX from coproporphyrinogen-III (O2 route): step 1/1. Its function is as follows. Involved in the heme biosynthesis. Catalyzes the aerobic oxidative decarboxylation of propionate groups of rings A and B of coproporphyrinogen-III to yield the vinyl groups in protoporphyrinogen-IX. The protein is Oxygen-dependent coproporphyrinogen-III oxidase of Yersinia pestis bv. Antiqua (strain Antiqua).